A 266-amino-acid chain; its full sequence is Mediator of RNA polymerase II transcription subunit 18 (266 aa).

The protein belongs to the Mediator complex subunit 18 family. As to quaternary structure, component of the Mediator complex.

Its subcellular location is the nucleus. In terms of biological role, component of the Mediator complex, a coactivator involved in the regulated transcription of nearly all RNA polymerase II-dependent genes. Mediator functions as a bridge to convey information from gene-specific regulatory proteins to the basal RNA polymerase II transcription machinery. Mediator is recruited to promoters by direct interactions with regulatory proteins and serves as a scaffold for the assembly of a functional preinitiation complex with RNA polymerase II and the general transcription factors. This is Mediator of RNA polymerase II transcription subunit 18 (SRB5) from Candida glabrata (strain ATCC 2001 / BCRC 20586 / JCM 3761 / NBRC 0622 / NRRL Y-65 / CBS 138) (Yeast).